The chain runs to 87 residues: Small ribosomal subunit protein bS20 (87 aa).

The interval 1–26 is disordered; the sequence is MANIKSAKKRAVQSEKARKHNASRRS.

Belongs to the bacterial ribosomal protein bS20 family.

In terms of biological role, binds directly to 16S ribosomal RNA. This is Small ribosomal subunit protein bS20 from Salmonella gallinarum (strain 287/91 / NCTC 13346).